Here is a 248-residue protein sequence, read N- to C-terminus: Large ribosomal subunit protein uL2 (248 aa).

The segment at 203–248 is disordered; it reads AHPAGGGHHPKGLTPAPRNAPPGRKVGHIAPRRTGRKKGASRTPTQ. Positions 227-242 are enriched in basic residues; it reads KVGHIAPRRTGRKKGA.

Belongs to the universal ribosomal protein uL2 family. Part of the 50S ribosomal subunit. Forms a bridge to the 30S subunit in the 70S ribosome.

Its function is as follows. One of the primary rRNA binding proteins. Required for association of the 30S and 50S subunits to form the 70S ribosome, for tRNA binding and peptide bond formation. It has been suggested to have peptidyltransferase activity; this is somewhat controversial. Makes several contacts with the 16S rRNA in the 70S ribosome. This Thermofilum pendens (strain DSM 2475 / Hrk 5) protein is Large ribosomal subunit protein uL2.